The sequence spans 101 residues: Small ribosomal subunit protein uS14 (101 aa).

Over residues 1–10 the composition is skewed to basic and acidic residues; the sequence is MAKKSSVEKN. A disordered region spans residues 1–23; it reads MAKKSSVEKNNRRKRMAKNAAPK. The segment covering 11-23 has biased composition (basic residues); sequence NRRKRMAKNAAPK.

The protein belongs to the universal ribosomal protein uS14 family. Part of the 30S ribosomal subunit. Contacts proteins S3 and S10.

Its function is as follows. Binds 16S rRNA, required for the assembly of 30S particles and may also be responsible for determining the conformation of the 16S rRNA at the A site. This is Small ribosomal subunit protein uS14 from Bradyrhizobium sp. (strain BTAi1 / ATCC BAA-1182).